Here is a 207-residue protein sequence, read N- to C-terminus: Protein ERP4 (207 aa).

An N-terminal signal peptide occupies residues methionine 1–serine 21. Over serine 22–threonine 174 the chain is Lumenal. One can recognise a GOLD domain in the interval lysine 36 to lysine 118. Residues tryptophan 175–isoleucine 195 traverse the membrane as a helical segment. Over glutamine 196 to valine 207 the chain is Cytoplasmic.

It belongs to the EMP24/GP25L family.

Its subcellular location is the endoplasmic reticulum membrane. Involved in vesicular protein trafficking. The protein is Protein ERP4 (ERP4) of Saccharomyces cerevisiae (strain ATCC 204508 / S288c) (Baker's yeast).